The sequence spans 388 residues: Succinate--CoA ligase [ADP-forming] subunit beta (388 aa).

An ATP-grasp domain is found at 9–244 (KEILRQAGVP…LDEEDPAEVE (236 aa)). ATP is bound by residues Lys46, 53–55 (GRG), Glu99, Ala102, and Glu107. Asn199 and Asp213 together coordinate Mg(2+). Residues Asn264 and 321 to 323 (GIM) contribute to the substrate site.

Belongs to the succinate/malate CoA ligase beta subunit family. As to quaternary structure, heterotetramer of two alpha and two beta subunits. Mg(2+) serves as cofactor.

It catalyses the reaction succinate + ATP + CoA = succinyl-CoA + ADP + phosphate. It carries out the reaction GTP + succinate + CoA = succinyl-CoA + GDP + phosphate. The protein operates within carbohydrate metabolism; tricarboxylic acid cycle; succinate from succinyl-CoA (ligase route): step 1/1. Succinyl-CoA synthetase functions in the citric acid cycle (TCA), coupling the hydrolysis of succinyl-CoA to the synthesis of either ATP or GTP and thus represents the only step of substrate-level phosphorylation in the TCA. The beta subunit provides nucleotide specificity of the enzyme and binds the substrate succinate, while the binding sites for coenzyme A and phosphate are found in the alpha subunit. The protein is Succinate--CoA ligase [ADP-forming] subunit beta of Albidiferax ferrireducens (strain ATCC BAA-621 / DSM 15236 / T118) (Rhodoferax ferrireducens).